Here is a 611-residue protein sequence, read N- to C-terminus: Translation initiation factor RLI1 (611 aa).

4Fe-4S ferredoxin-type domains follow at residues 7 to 31 (RVAIVNSDKCKPKKCRQECKKSCPV) and 46 to 75 (RIAFISEQLCIGCGICPKRCPFGAITIINL). 2 consecutive ABC transporter domains span residues 77–318 (TNLE…FLDG) and 345–565 (AEKS…LKNL). Residues 110 to 117 (GTNGIGKS) and 382 to 389 (GENGTGKT) each bind ATP.

This sequence belongs to the ABC transporter superfamily. ABCE family. Component of the multifactor complex (MFC). The complex associates with pre-initiation complexes.

The protein localises to the cytoplasm. It localises to the nucleus. Functionally, component of the multifactor complex (MFC) involved in translation initiation. Required for the binding of MFC to the 40S ribosome. Required for the processing and nuclear export of the 60S and 40S ribosomal subunits. This Chaetomium thermophilum (strain DSM 1495 / CBS 144.50 / IMI 039719) (Thermochaetoides thermophila) protein is Translation initiation factor RLI1 (RLI1).